The primary structure comprises 337 residues: Glucose transporter 2C (337 aa).

The tract at residues 1-22 is disordered; the sequence is MTERRDNVSHAPDAIEGPNDGA. At 1 to 43 the chain is on the cytoplasmic side; sequence MTERRDNVSHAPDAIEGPNDGAHAEDTSPGFFSLENLGVAQVQ. A helical membrane pass occupies residues 44-64; the sequence is VVGGTLNGFSIGFVAVYILLY. The Extracellular portion of the chain corresponds to 65–119; the sequence is EVATNCSLFKTTEACKAVGSYGCEWKDTEVCSWKKECDSDSDGVNPCESLIGYSS. Residue Asn69 is glycosylated (N-linked (GlcNAc...) asparagine). Residues 120–140 form a helical membrane-spanning segment; the sequence is LYSGIFASAMIVGSMVGSIIA. At 141–152 the chain is on the cytoplasmic side; the sequence is GKCITMFGLKKS. The chain crosses the membrane as a helical span at residues 153 to 173; the sequence is FIIVGVMSVVASALNHISVAT. Residues 174-175 are Extracellular-facing; the sequence is NE. A helical membrane pass occupies residues 176–196; it reads FWVLCAGRVLMGIGLGVVCVI. At 197-214 the chain is on the cytoplasmic side; the sequence is CPMYVNENAHPKLSKVDG. Residues 215–235 form a helical membrane-spanning segment; that stretch reads VLFQVFITFGIMLAAMLGLIL. Topologically, residues 236–250 are extracellular; sequence DKTVNYDNDPDMAGR. Residues 251-271 traverse the membrane as a helical segment; sequence FHGFCAVSSVLSVAMFLVGMF. The Cytoplasmic segment spans residues 272 to 300; that stretch reads LRESTATFSQDDDGKADGGMDPNEYGWGQ. The helical transmembrane segment at 301 to 321 threads the bilayer; sequence MLWPLFMGAVTAGTLQLTGIN. Over 322–337 the chain is Extracellular; that stretch reads AVMNYAPKITENLGMD.

This sequence belongs to the major facilitator superfamily. Sugar transporter (TC 2.A.1.1) family.

The protein resides in the membrane. Its function is as follows. Facilitative glucose transporter. The polypeptide is Glucose transporter 2C (THT2C) (Trypanosoma brucei brucei).